A 721-amino-acid chain; its full sequence is Polyribonucleotide nucleotidyltransferase (721 aa).

Mg(2+) contacts are provided by Asp495 and Asp501. The KH domain maps to Pro562–Ile621. Residues Gly631–Arg699 form the S1 motif domain. A disordered region spans residues Gly700–Ser721.

This sequence belongs to the polyribonucleotide nucleotidyltransferase family. It depends on Mg(2+) as a cofactor.

The protein resides in the cytoplasm. It catalyses the reaction RNA(n+1) + phosphate = RNA(n) + a ribonucleoside 5'-diphosphate. Involved in mRNA degradation. Catalyzes the phosphorolysis of single-stranded polyribonucleotides processively in the 3'- to 5'-direction. This chain is Polyribonucleotide nucleotidyltransferase, found in Synechococcus sp. (strain CC9311).